A 393-amino-acid polypeptide reads, in one-letter code: Protein TsgA (393 aa).

The next 12 helical transmembrane spans lie at 11-31, 51-71, 78-98, 101-121, 134-154, 162-182, 206-226, 245-265, 273-293, 297-317, 332-352, and 361-381; these read WISF…GMVM, FLNA…EIVP, FGFL…SLAL, AAMF…TFLI, LLFT…IAAF, WYWV…LTFG, IGVL…LGFI, TLVS…SFIL, ILTV…TGTP, AWSI…IITL, FVLT…GPIV, and LLTA…LGFV.

Belongs to the major facilitator superfamily. TsgA family.

The protein localises to the cell inner membrane. The sequence is that of Protein TsgA from Shigella dysenteriae serotype 1 (strain Sd197).